A 239-amino-acid chain; its full sequence is Sugar fermentation stimulation protein homolog (239 aa).

Belongs to the SfsA family.

This chain is Sugar fermentation stimulation protein homolog, found in Agrobacterium fabrum (strain C58 / ATCC 33970) (Agrobacterium tumefaciens (strain C58)).